Here is a 111-residue protein sequence, read N- to C-terminus: UPF0060 membrane protein HCH_03337 (111 aa).

The next 4 membrane-spanning stretches (helical) occupy residues 8–28 (LLFA…WLVI), 33–53 (SLWL…LLTL), 65–85 (YGGM…GVGL), and 88–108 (FDFL…LQPI).

It belongs to the UPF0060 family.

The protein resides in the cell inner membrane. This chain is UPF0060 membrane protein HCH_03337, found in Hahella chejuensis (strain KCTC 2396).